The primary structure comprises 86 residues: High affinity immunoglobulin epsilon receptor subunit gamma (86 aa).

The first 18 residues, 1–18, serve as a signal peptide directing secretion; that stretch reads MIPAVILFLLLLVEEAAA. Residues 19–23 are Extracellular-facing; that stretch reads LGEPQ. A helical transmembrane segment spans residues 24-44; sequence LCYILDAILFLYGIVLTLLYC. The Cytoplasmic segment spans residues 45–86; the sequence is RLKIQVRKADIASREKSDAVYTGLNTRNQETYETLKHEKPPQ. One can recognise an ITAM domain in the interval 54 to 82; it reads DIASREKSDAVYTGLNTRNQETYETLKHE. Phosphotyrosine occurs at positions 65 and 76. Thr-78 carries the phosphothreonine modification.

It belongs to the CD3Z/FCER1G family. As to quaternary structure, igE Fc receptor is a tetramer of an alpha chain, a beta chain, and two disulfide linked gamma chains. Associates with FCGR1A to form a functional receptor complex. The signaling subunit of immunoglobulin gamma (IgG) Fc receptor complex. As a homodimer or a heterodimer of CD247 and FCER1G, associates with the ligand binding subunit FCGR3A to form a functional receptor complex. Associates with CLEC6A. Interacts with CLEC4E. Interacts (via ITAM domain) with SYK (via SH2 domains); activates SYK, enabling integrin-mediated activation of neutrophils and macrophages. Interacts with common beta chain of interleukin 3 receptor CSF2RB and recruits SYK in response to IL3 stimulation; this interaction is direct. Interacts with CD300LH; the interaction may be indirect. Interacts with CD300LD. Interacts with TARM1. In terms of tissue distribution, expressed in leukocytes and pinealocytes. Expression in the pineal gland does not undergo circadian variations.

The protein resides in the cell membrane. Adapter protein containing an immunoreceptor tyrosine-based activation motif (ITAM) that transduces activation signals from various immunoreceptors. As a component of the high-affinity immunoglobulin E (IgE) receptor, mediates allergic inflammatory signaling in mast cells. As a constitutive component of interleukin-3 receptor complex, selectively mediates interleukin 4/IL4 production by basophils priming T-cells toward effector T-helper 2 subset. Associates with pattern recognition receptors CLEC4D and CLEC4E to form a functional signaling complex in myeloid cells. Binding of mycobacterial trehalose 6,6'-dimycolate (TDM) to this receptor complex leads to phosphorylation of ITAM, triggering activation of SYK, CARD9 and NF-kappa-B, consequently driving maturation of antigen-presenting cells and shaping antigen-specific priming of T-cells toward effector T-helper 1 and T-helper 17 cell subtypes. May function cooperatively with other activating receptors. Functionally linked to integrin beta-2/ITGB2-mediated neutrophil activation. Also involved in integrin alpha-2/ITGA2-mediated platelet activation. This Rattus norvegicus (Rat) protein is High affinity immunoglobulin epsilon receptor subunit gamma (Fcer1g).